The following is a 181-amino-acid chain: Oligoribonuclease (181 aa).

Residues 8–171 (LIWIDLEMTG…DDIRESVAEL (164 aa)) form the Exonuclease domain. The active site involves Tyr129.

The protein belongs to the oligoribonuclease family. Homodimer.

It is found in the cytoplasm. 3'-to-5' exoribonuclease specific for small oligoribonucleotides. This is Oligoribonuclease from Escherichia coli O139:H28 (strain E24377A / ETEC).